Reading from the N-terminus, the 459-residue chain is MSNKAWGGRFEVQPEEWVDDFNASITFDQTLIDQDIEGSIAHATMLANQGIISQQDSEQIIQGLKSIQHDYHQDQIQFSASLEDIHLNIEHELIKRIGDAGGKLHTGRSRNDQVATDMHLYTKKQVQDIIALIKSLQSVIVDIASNNVDTIMPGYTHLQRAQPISFAHHIMTYFWMLQRDQQRFEDSLKRIDINPLGAAALSGTTYPIDRHETTALLNFGSLYENSLDAVSDRDYIIETLHNISLTMVHLSRFAEEIIFWSTDEAKFITLSDAFSTGSSIMPQKKNPDMAELIRGKVGRTTGHLMSMLMTLKGLPLAYNKDMQEDKEGLFDAVHTIKGSLRIFEGMIQTMTINKERLNQTVKEDFSNATELADYLVTKNIPFRTAHEIVGKIVLECIQQGHYLLDVPLSTYQQHHSSIDADIYDYLQPENCLKRRQSYGSTGQSSVKQQLDVAKQLLSQ.

Belongs to the lyase 1 family. Argininosuccinate lyase subfamily.

It is found in the cytoplasm. It carries out the reaction 2-(N(omega)-L-arginino)succinate = fumarate + L-arginine. It functions in the pathway amino-acid biosynthesis; L-arginine biosynthesis; L-arginine from L-ornithine and carbamoyl phosphate: step 3/3. In Staphylococcus aureus (strain MRSA252), this protein is Argininosuccinate lyase.